The primary structure comprises 244 residues: Venom nerve growth factor (244 aa).

A signal peptide spans 1–18 (MSMLCYTLIIAFLIGIWA). The propeptide occupies 19-125 (APKSEDNVSL…SLNRNIRAKR (107 aa)). Disulfide bonds link Cys139–Cys204, Cys182–Cys232, and Cys192–Cys234. A glycan (N-linked (GlcNAc...) asparagine) is linked at Asn148.

Belongs to the NGF-beta family. In terms of assembly, homodimer; non-covalently linked. In terms of processing, N-glycosylated. As to expression, expressed by the venom gland.

Its subcellular location is the secreted. Nerve growth factor is important for the development and maintenance of the sympathetic and sensory nervous systems. It stimulates division and differentiation of sympathetic and embryonic sensory neurons as well as basal forebrain cholinergic neurons in the brain. Its relevance in the snake venom is not clear. However, it has been shown to inhibit metalloproteinase-dependent proteolysis of platelet glycoprotein Ib alpha, suggesting a metalloproteinase inhibition to prevent metalloprotease autodigestion and/or protection against prey proteases. Binds a lipid between the two protein chains in the homodimer. The lipid-bound form promotes histamine relase from mouse mast cells, contrary to the lipid-free form. It promotes neurite outgrowth in rat PC12 pheochromocytoma cells. This is Venom nerve growth factor from Macrovipera lebetinus (Levantine viper).